The sequence spans 704 residues: Protein polyglycylase TTLL10 (704 aa).

3 disordered regions span residues 1-32, 46-125, and 137-170; these read MALH…LPSP, GHRA…SVKE, and DADD…PGQG. A compositionally biased stretch (basic residues) spans 93-105; it reads VSSKRSKRSRIHP. The segment covering 114 to 125 has biased composition (basic and acidic residues); that stretch reads THEKQMGSSVKE. Positions 169–540 constitute a TTL domain; that stretch reads QGPFFYIGGT…TCQKSLHSQK (372 aa). ATP contacts are provided by residues Lys301, 307 to 308, 350 to 353, 363 to 365, and 406 to 407; these read QG, QRYV, KFD, and TN. Gln307 is an a protein binding site. Mg(2+) contacts are provided by Asp486, Glu499, and Asn501. Residues 565-704 form a disordered region; sequence LASSRPLNRL…EQRSTSHRGS (140 aa). Pro residues-rich tracts occupy residues 576–588 and 596–612; these read NPNP…ANPH and HPHP…PPRP. Low complexity-rich tracts occupy residues 616 to 629 and 654 to 667; these read AASS…AAIS and SDSS…SEPS.

It depends on Mg(2+) as a cofactor. In terms of tissue distribution, highly expressed in testis. Expressed in brain, heart, kidney, liver, lung, muscle and trachea.

It is found in the cytoplasm. Its subcellular location is the cytoskeleton. The protein localises to the cell projection. It localises to the cilium. The protein resides in the cilium axoneme. It catalyses the reaction (glycyl)(n)-glycyl-L-glutamyl-[protein] + glycine + ATP = (glycyl)(n+1)-glycyl-L-glutamyl-[protein] + ADP + phosphate + H(+). Functionally, polyglycylase which modifies both tubulin and non-tubulin proteins, generating polyglycine side chains of variable lengths on the gamma-carboxyl groups of specific glutamate residues of target proteins. Involved in the elongation step rather than the initiation step of the polyglycylation reaction. Polyglycylates alpha-tubulin and beta-tubulin. Polyglycylates non-tubulin proteins such as nucleosome assembly protein NAP1. The chain is Protein polyglycylase TTLL10 from Mus musculus (Mouse).